Consider the following 693-residue polypeptide: DNA ligase (693 aa).

Residues 35–39, 84–85, and glutamate 121 contribute to the NAD(+) site; these read DAEYD and SI. The active-site N6-AMP-lysine intermediate is lysine 123. NAD(+)-binding residues include arginine 144, glutamate 180, lysine 297, and lysine 321. Residues cysteine 418, cysteine 421, cysteine 436, and cysteine 442 each contribute to the Zn(2+) site. Positions 601-690 constitute a BRCT domain; it reads PASGSVAGLT…EQSPINNKDG (90 aa).

This sequence belongs to the NAD-dependent DNA ligase family. LigA subfamily. Mg(2+) is required as a cofactor. Requires Mn(2+) as cofactor.

It carries out the reaction NAD(+) + (deoxyribonucleotide)n-3'-hydroxyl + 5'-phospho-(deoxyribonucleotide)m = (deoxyribonucleotide)n+m + AMP + beta-nicotinamide D-nucleotide.. Functionally, DNA ligase that catalyzes the formation of phosphodiester linkages between 5'-phosphoryl and 3'-hydroxyl groups in double-stranded DNA using NAD as a coenzyme and as the energy source for the reaction. It is essential for DNA replication and repair of damaged DNA. The chain is DNA ligase from Azoarcus sp. (strain BH72).